A 261-amino-acid chain; its full sequence is uncharacterized protein (261 aa).

A Response regulatory domain is found at 7–122 (TAVLADDEPL…RLASCCEKLQ (116 aa)). Position 54 is a 4-aspartylphosphate (aspartate 54). An HTH LytTR-type domain is found at 157-261 (LKASKGEEIH…RALQHLFKVS (105 aa)).

This is an uncharacterized protein from Vibrio cholerae serotype O1 (strain ATCC 39315 / El Tor Inaba N16961).